The primary structure comprises 546 residues: Membrane protein insertase YidC (546 aa).

The helical transmembrane segment at 6-26 threads the bilayer; that stretch reads NLLLIALLFVSFMIWQAWQVD. The span at 30-44 shows a compositional bias: low complexity; the sequence is QPTAQTTQQTTNTAT. The tract at residues 30–55 is disordered; that stretch reads QPTAQTTQQTTNTATGDKASQAVPGS. The next 4 helical transmembrane spans lie at 344-364, 419-439, 457-477, and 498-518; these read KFIHSFVGNWGFSIIVITFIV, LGGCLPLIIQMPIFLALYYML, LSAQDPYYILPILMGITMYFI, and PVIFTVFFLWFPAGLVLYYIV.

The protein belongs to the OXA1/ALB3/YidC family. Type 1 subfamily. As to quaternary structure, interacts with the Sec translocase complex via SecD. Specifically interacts with transmembrane segments of nascent integral membrane proteins during membrane integration.

The protein resides in the cell inner membrane. Required for the insertion and/or proper folding and/or complex formation of integral membrane proteins into the membrane. Involved in integration of membrane proteins that insert both dependently and independently of the Sec translocase complex, as well as at least some lipoproteins. Aids folding of multispanning membrane proteins. This Yersinia pestis protein is Membrane protein insertase YidC.